The chain runs to 189 residues: Photosystem I assembly protein Ycf4 (189 aa).

Helical transmembrane passes span 31 to 51 (TVIL…YFGF) and 70 to 90 (VMSF…LTII).

It belongs to the Ycf4 family.

Its subcellular location is the plastid. It localises to the chloroplast thylakoid membrane. Its function is as follows. Seems to be required for the assembly of the photosystem I complex. The sequence is that of Photosystem I assembly protein Ycf4 from Chlorokybus atmophyticus (Soil alga).